The sequence spans 563 residues: MRVVAAAMLYFYIVVLAICSVGIQGIDYPSVSFNLDGAKSATYRDFLSNLRKTVATGTYEVNGLPVLRRESEVQVKSRFVLVPLTNYNGNTVTLAVDVTNLYVVAFSGNANSYFFKDATEVQKSNLFVGTKQNTLSFTGNYDNLETAANTRRESIELGPSPLDGAITSLYHGDSVARSLLVVIQMVSEAARFRYIEQEVRRSLQQATSFTPNALMLSMENNWSSMSLEIQQAGNNVSPFFGTVQLLNYDHTHRLVDNFEELYKITGIAILLFRCSSPSNDNAIRMPLDLAGEDNKYNDGETCTLRTSFTRNIVGRDGLCVDVRNGYDTDGTPLQLWPCGTQRNQRWTFDSDDTIRSMGKCMTANGLNNGSNIVIFNCSTAAENAIKWEVPIDGSIINPSSGLVMTAPRAASRTILLLEDNIYAASQGWTVTNNVKPIVASIVGYKEMCLQSNGENNGVWMEDCEATSLQQQWALYGDRTIRVNSTRGLCVTTNGYNSKDLIIILKCQGLPSQRWFFNSDGAIVNPKSRHVMDVRASNVSLREIIIFPATGNPNQQWVTQVLPS.

A signal peptide spans 1-25 (MRVVAAAMLYFYIVVLAICSVGIQG). Glu188 is a catalytic residue. N-linked (GlcNAc...) asparagine glycosylation occurs at Asn221. Intrachain disulfides connect Cys274–Cys302, Cys319–Cys338, and Cys360–Cys377. Ricin B-type lectin domains are found at residues 305 to 431 (RTSF…WTVT) and 434 to 559 (VKPI…WVTQ). A 1-alpha repeat occupies 316–356 (DGLCVDVRNGYDTDGTPLQLWPCGTQRNQRWTFDSDDTIRS). Residues 357–397 (MGKCMTANGLNNGSNIVIFNCSTAAENAIKWEVPIDGSIIN) form a 1-beta repeat. N-linked (GlcNAc...) asparagine glycosylation is found at Asn368 and Asn376. Residues 400–432 (SGLVMTAPRAASRTILLLEDNIYAASQGWTVTN) form a 1-gamma repeat. The stretch at 445-482 (KEMCLQSNGENNGVWMEDCEATSLQQQWALYGDRTIRV) is one 2-alpha repeat. A disulfide bridge links Cys448 with Cys463. A glycan (N-linked (GlcNAc...) asparagine) is linked at Asn483. Residues 486–524 (RGLCVTTNGYNSKDLIIILKCQGLPSQRWFFNSDGAIVN) form a 2-beta repeat. An intrachain disulfide couples Cys489 to Cys506. The 2-gamma repeat unit spans residues 527–554 (SRHVMDVRASNVSLREIIIFPATGNPNQ). Residue Asn537 is glycosylated (N-linked (GlcNAc...) asparagine).

The protein in the N-terminal section; belongs to the ribosome-inactivating protein family. Type 2 RIP subfamily. Disulfide-linked dimer of A and B chains.

It catalyses the reaction Endohydrolysis of the N-glycosidic bond at one specific adenosine on the 28S rRNA.. Non-toxic type 2 RIP which strongly inhibits mammalian protein synthesis but does not affect plant nor bacterial protein synthesis. The A chain is responsible for inhibiting protein synthesis through the catalytic inactivation of 60S ribosomal subunits by removing adenine from position 4,324 of 28S rRNA. Functionally, the B chain is a galactose-specific lectin that facilitates the binding of nigrin b to the cell membrane that precedes endocytosis. In Sambucus nigra (European elder), this protein is Nigrin b.